A 250-amino-acid polypeptide reads, in one-letter code: Ribonuclease HII (250 aa).

In terms of domain architecture, RNase H type-2 spans 66-250 (QLVAGVDEVG…SFAPVSEYEK (185 aa)). Positions 72, 73, and 164 each coordinate a divalent metal cation.

Belongs to the RNase HII family. Mn(2+) serves as cofactor. It depends on Mg(2+) as a cofactor.

The protein resides in the cytoplasm. The enzyme catalyses Endonucleolytic cleavage to 5'-phosphomonoester.. Functionally, endonuclease that specifically degrades the RNA of RNA-DNA hybrids. The protein is Ribonuclease HII of Lactobacillus johnsonii (strain CNCM I-12250 / La1 / NCC 533).